A 345-amino-acid chain; its full sequence is Delta(6)-protoilludene synthase (345 aa).

Mg(2+) is bound by residues D84, N220, S224, and E228. Residues 84 to 88 carry the DDXXD motif motif; it reads DEYSD. (2E,6E)-farnesyl diphosphate contacts are provided by R309 and Y310.

This sequence belongs to the terpene synthase family. In terms of assembly, monomer. It depends on Mg(2+) as a cofactor.

The catalysed reaction is (2E,6E)-farnesyl diphosphate = Delta(6)-protoilludene + diphosphate. It functions in the pathway secondary metabolite biosynthesis. In terms of biological role, delta(6)-protoilludene synthase, part of the gene cluster that mediates the biosynthesis of melleolides, a range of antifungal and phytotoxic polyketide derivatives composed of an orsellinic acid (OA) moiety esterified to various sesquiterpene alcohols. The first step in melleolides biosynthesis is performed by the delta(6)-protoilludene synthase PRO1 which catalyzes the cyclization of farnesyl diphosphate to protoilludene. The orsellinic acid synthase armB produces OA by condensing acetyl-CoA with 3 malonyl-CoA units in a three-round chain elongation reaction folowed by a C2-C7 ring closure. ArmB further catalyzes the trans-esterification of OA to the various sesquiterpene alcohols resulting from the hydroxylation of protoilludene. The melleolides cluster also includes 5 cytochrome P450 monooxygenases, 4 NAD(+)-dependent oxidoreductases, one flavin-dependent oxidoreductase, and one O-methyltransferase. The cytochrome P450 monooxygenases may be involved in protoilludene hydroxylation to elaborate melleolides with multiple alcohol groups, such as melleolide D, which carries alcohol functionalities at C-4, C-5, C-10, and C-13. The role of the NAD(+)-dependent enzymes remains unknown. Numerous melleolides, including arnamial, show 5'-O-methylation of the aromatic moiety which may be catalyzed by the methyltransferase encoded in the cluster. The flavin-dependent oxidoreductase might represent the dehydrogenase yielding the aldehyde in position 1 of arnamial and other melleolides. Finally, several halogenases, localized outside of the cluster, are able to catalyze the transfer of a single chlorine atom to the melleolide backbone, resulting in a 6'-chloromelleolide product. The chain is Delta(6)-protoilludene synthase from Armillaria gallica (Bulbous honey fungus).